The sequence spans 93 residues: Cell division protein FtsB (93 aa).

Residues 1-3 (MRL) are Cytoplasmic-facing. A helical transmembrane segment spans residues 4–21 (FILSLFALLVMFQYDFWF). Residues 22–93 (GKNGYLDYQD…FYRIVKNKNR (72 aa)) lie on the Periplasmic side of the membrane. Residues 28-76 (DYQDIKAEIIQRKQENKKLSQRNQTIFAEIQDLKNGIEAIEERARMEHE) adopt a coiled-coil conformation.

This sequence belongs to the FtsB family. In terms of assembly, part of a complex composed of FtsB, FtsL and FtsQ.

Its subcellular location is the cell inner membrane. Its function is as follows. Essential cell division protein. May link together the upstream cell division proteins, which are predominantly cytoplasmic, with the downstream cell division proteins, which are predominantly periplasmic. The protein is Cell division protein FtsB of Histophilus somni (strain 129Pt) (Haemophilus somnus).